The following is a 313-amino-acid chain: Ribosomal RNA small subunit methyltransferase H (313 aa).

S-adenosyl-L-methionine-binding positions include 35–37, aspartate 55, phenylalanine 79, aspartate 101, and glutamine 108; that span reads GGH.

This sequence belongs to the methyltransferase superfamily. RsmH family.

It is found in the cytoplasm. The catalysed reaction is cytidine(1402) in 16S rRNA + S-adenosyl-L-methionine = N(4)-methylcytidine(1402) in 16S rRNA + S-adenosyl-L-homocysteine + H(+). Its function is as follows. Specifically methylates the N4 position of cytidine in position 1402 (C1402) of 16S rRNA. The chain is Ribosomal RNA small subunit methyltransferase H from Shigella dysenteriae serotype 1 (strain Sd197).